Here is a 266-residue protein sequence, read N- to C-terminus: Undecaprenyl-diphosphatase (266 aa).

8 helical membrane passes run 1 to 21, 43 to 63, 81 to 101, 109 to 129, 159 to 179, 183 to 203, 219 to 239, and 246 to 266; these read MVVI…SSTG, FLII…WKDI, LKII…DDII, VLIV…IEVV, LAMI…LLLG, PLAA…ATAL, YLAL…KWFM, and SFAS…VLLY.

This sequence belongs to the UppP family.

The protein localises to the cell inner membrane. It carries out the reaction di-trans,octa-cis-undecaprenyl diphosphate + H2O = di-trans,octa-cis-undecaprenyl phosphate + phosphate + H(+). Its function is as follows. Catalyzes the dephosphorylation of undecaprenyl diphosphate (UPP). Confers resistance to bacitracin. The protein is Undecaprenyl-diphosphatase of Fusobacterium nucleatum subsp. nucleatum (strain ATCC 25586 / DSM 15643 / BCRC 10681 / CIP 101130 / JCM 8532 / KCTC 2640 / LMG 13131 / VPI 4355).